The following is a 133-amino-acid chain: Ribosome-binding factor A (133 aa).

The protein belongs to the RbfA family. As to quaternary structure, monomer. Binds 30S ribosomal subunits, but not 50S ribosomal subunits or 70S ribosomes.

It localises to the cytoplasm. One of several proteins that assist in the late maturation steps of the functional core of the 30S ribosomal subunit. Associates with free 30S ribosomal subunits (but not with 30S subunits that are part of 70S ribosomes or polysomes). Required for efficient processing of 16S rRNA. May interact with the 5'-terminal helix region of 16S rRNA. The sequence is that of Ribosome-binding factor A from Enterobacter sp. (strain 638).